The chain runs to 2698 residues: Chromodomain-helicase-DNA-binding protein 6 (2698 aa).

3 stretches are compositionally biased toward basic and acidic residues: residues 1–12 (MKMKIQKKEKQL), 100–115 (EPGE…DREP), and 122–171 (EPKE…KRSC). The segment at 1–243 (MKMKIQKKEK…KRRSGRQVKR (243 aa)) is disordered. Positions 1-746 (MKMKIQKKEK…MMELRKCCNH (746 aa)) are required for DNA-dependent ATPase activity. Over residues 213–224 (QSLPNPSLQSPE) the composition is skewed to low complexity. Chromo domains lie at 291-342 (NIIE…KDPR) and 374-438 (IEID…KPVE). A Helicase ATP-binding domain is found at 472 to 646 (LFNWYNRKNC…FSLLNFLEPS (175 aa)). Residue 485 to 492 (DEMGLGKT) coordinates ATP. Positions 597 to 600 (DEAH) match the DEAH box motif. In terms of domain architecture, Helicase C-terminal spans 786–955 (LIDKLLPKLI…LSKMEVEDLL (170 aa)). The disordered stretch occupies residues 1318-1370 (SLSAEQGVTDGTSDIPERGNIDKEDSAEDKVDGLQKQTASPSDGSDGIFGEKK). A compositionally biased stretch (polar residues) spans 1320–1329 (SAEQGVTDGT). Basic and acidic residues predominate over residues 1332-1350 (IPERGNIDKEDSAEDKVDG). Residues 1435 to 1489 (RWTRREQADFYRTVSSFGVVYDQEKEAFDWTQFRAISRLDKKSDENLEHYFHSFV) enclose the Myb-like domain. Positions 1707–1730 (EPRSFQEAPSTNMQSRKKTVTVSA) are enriched in polar residues. The disordered stretch occupies residues 1707-1731 (EPRSFQEAPSTNMQSRKKTVTVSAS). S1852 is modified (phosphoserine). Disordered regions lie at residues 1935–2046 (GLGS…ASGI), 2111–2137 (LPTP…HSFS), 2308–2337 (TTLN…QAEK), 2359–2387 (PGFG…IGSL), 2538–2587 (ASLA…PTIT), and 2626–2698 (QGRH…DDTN). Composition is skewed to basic and acidic residues over residues 1943 to 1955 (GEKP…DPYR), 1975 to 1991 (FKLK…ESSE), and 2004 to 2024 (SEPK…KDGA). Low complexity-rich tracts occupy residues 2117 to 2127 (SSSAGSRSSLS) and 2315 to 2336 (PEGP…SQAE). A compositionally biased stretch (low complexity) spans 2538-2550 (ASLASTKSGASAT). A compositionally biased stretch (basic and acidic residues) spans 2552 to 2573 (KTTEDELSGRDVKADSLVEDKP). Polar residues-rich tracts occupy residues 2578–2587 (FSDQSEPTIT) and 2664–2675 (SDQNCTESSVTV). Residues 2677–2698 (PEREHVAQAREEGLKDSNDDTN) are compositionally biased toward basic and acidic residues.

It belongs to the SNF2/RAD54 helicase family. In terms of assembly, interacts with NFE2L2; involved in activation of the transcription. May interact with PPARA. In terms of tissue distribution, widely expressed.

The protein resides in the nucleus. It localises to the nucleoplasm. The catalysed reaction is ATP + H2O = ADP + phosphate + H(+). In terms of biological role, ATP-dependent chromatin-remodeling factor. Regulates transcription by disrupting nucleosomes in a largely non-sliding manner which strongly increases the accessibility of chromatin. Activates transcription of specific genes in response to oxidative stress through interaction with NFE2L2. The protein is Chromodomain-helicase-DNA-binding protein 6 (Chd6) of Rattus norvegicus (Rat).